The primary structure comprises 461 residues: Deoxyguanosinetriphosphate triphosphohydrolase-like protein (461 aa).

The tract at residues 22–41 is disordered; it reads ERFLPDPPREKDNRPPFRRD. The segment covering 24 to 41 has biased composition (basic and acidic residues); the sequence is FLPDPPREKDNRPPFRRD. Positions 72–285 constitute an HD domain; sequence RLTHSLEVAQ…MELADDIAYG (214 aa).

The protein belongs to the dGTPase family. Type 2 subfamily.

This chain is Deoxyguanosinetriphosphate triphosphohydrolase-like protein, found in Haemophilus influenzae (strain PittEE).